We begin with the raw amino-acid sequence, 627 residues long: Protein CER1-like 1 (627 aa).

The next 5 membrane-spanning stretches (helical) occupy residues 19-39 (FKYL…VTAV), 48-68 (LMIV…ISVS), 126-146 (GAIL…YWFH), 186-206 (LLFA…IVSI), and 328-348 (YLTC…TSAI). Residues 138-272 (VEFLYYWFHR…MPIYDFIYGT (135 aa)) form the Fatty acid hydroxylase domain.

Belongs to the sterol desaturase family. In terms of tissue distribution, expressed in flowers and siliques. Not detected in pollen, pedicels and seeds.

It localises to the membrane. This Arabidopsis thaliana (Mouse-ear cress) protein is Protein CER1-like 1.